The sequence spans 191 residues: Retinin (191 aa).

Residues 1–21 form the signal peptide; sequence MSRLFLPVLAIVLVSIGASHT. A disordered region spans residues 52–88; that stretch reads LADGSSGSVSSSAAQPEDQSQEEAEEQQVSSASSGSA. Low complexity-rich tracts occupy residues 55–69 and 78–88; these read GSSGSVSSSAAQPED and QQVSSASSGSA.

In terms of processing, phosphorylated. As to expression, specifically expressed in cornea (at protein level). Detected in retina and cortex.

The protein localises to the secreted. This is Retinin from Drosophila melanogaster (Fruit fly).